A 355-amino-acid polypeptide reads, in one-letter code: Protein ECERIFERUM 16 (355 aa).

2 disordered regions span residues 1–60 (MDSK…LPSN) and 296–315 (HSSTEQFNKPGNPSDQKIHM). The segment covering 7–28 (AKSKRAHTLHHSKKSHSVHKPK) has biased composition (basic residues). 2 stretches are compositionally biased toward polar residues: residues 41-53 (QGNQTKSPVQSRR) and 296-310 (HSSTEQFNKPGNPSD).

As to quaternary structure, interacts with RST1. Expressed in taproots, lateral roots, root tips, leaf veins, cauline leaves, inflorescences, flowers, and siliques.

It localises to the cytoplasm. Its subcellular location is the cytosol. It is found in the endoplasmic reticulum. In terms of biological role, together with RST1, acts as a cofactor of the cytoplasmic exosome and connects the cytosolic RNA exosome to the SKI complex. Acts as a post-transcriptional gene silencing (PTGS) suppressor. CER16/RIPR can, like RST1 suppress the production of small interfering RNAs (siRNAs) from the CER3 locus, which is involved in cuticule membrane and wax production, and in the typhine and sporopollenin biosynthesis of pollen. This chain is Protein ECERIFERUM 16, found in Arabidopsis thaliana (Mouse-ear cress).